We begin with the raw amino-acid sequence, 576 residues long: DNA mismatch repair protein MutL (576 aa).

The protein belongs to the DNA mismatch repair MutL/HexB family.

Its function is as follows. This protein is involved in the repair of mismatches in DNA. It is required for dam-dependent methyl-directed DNA mismatch repair. May act as a 'molecular matchmaker', a protein that promotes the formation of a stable complex between two or more DNA-binding proteins in an ATP-dependent manner without itself being part of a final effector complex. In Chlamydia trachomatis serovar A (strain ATCC VR-571B / DSM 19440 / HAR-13), this protein is DNA mismatch repair protein MutL.